We begin with the raw amino-acid sequence, 139 residues long: Large ribosomal subunit protein uL16 (139 aa).

Positions 1–16 (MLIPKRTKYRKQHRPV) are enriched in basic residues. The tract at residues 1 to 22 (MLIPKRTKYRKQHRPVRSGMSK) is disordered.

This sequence belongs to the universal ribosomal protein uL16 family. As to quaternary structure, part of the 50S ribosomal subunit.

Its function is as follows. Binds 23S rRNA and is also seen to make contacts with the A and possibly P site tRNAs. The chain is Large ribosomal subunit protein uL16 from Bifidobacterium longum subsp. infantis (strain ATCC 15697 / DSM 20088 / JCM 1222 / NCTC 11817 / S12).